Consider the following 644-residue polypeptide: MPVITLPDGSQRSFDHPVTVYDVAADIGPGLAKAALGGKIEGRLVDSSYPLEKDTKLTIITERDMDGLEIIRHSCAHLLAQAVKALYPEAQVTIGPVIEDGFYYDFAYPKGFTPEDLEAIEAKMRELVEQDLSVHRELKSREEAVSLFRRMGEEYKAEIIASIPSEEEISLYRQGDFVDLCRGPHVPSTARLKAFKLTKVAGAYWRGDANNEMLQRIYGTAWPDKKALKAYLHRLEEAEKRDHRRIGADLDLFSIQEEAGGGLVFWHPMGARIRRVIEDFWQERHTAAGYEMLYTPHIAHEELWQTSGHTDFYRESMYQPMEDDHQLYQLKPMNCPFHVLIYQGRLRSYRELPIRWAELGTVYRHEMSGALHGLMRVRGFTQDDAHIFCREEQIENEILGILDLTLEMLAAFGFDRYEIDLSTRPEKSVGPEAIWEQATQALRSALDKKGLDYAVDEGGGAFYGPKIDIKIEDAIGRKWQCSTVQLDFNLPERFAMEYVAEDGARHRPIMIHRAVLGSLERFFGVLIEHYEGKFPPWLAPVQVVVMSITDRQEGYARQVEEAMRNKGFRSLLDLRNEKIGFKIREHILRRIPYLLVIGDREVANQTVAVRTRYSQDLGAMSLDAFMEHLSVDVARLGHNISEED.

One can recognise a TGS domain in the interval 1 to 61 (MPVITLPDGS…EKDTKLTIIT (61 aa)). The tract at residues 242 to 535 (DHRRIGADLD…LIEHYEGKFP (294 aa)) is catalytic. Zn(2+) contacts are provided by Cys335, His386, and His512.

The protein belongs to the class-II aminoacyl-tRNA synthetase family. In terms of assembly, homodimer. Zn(2+) is required as a cofactor.

The protein localises to the cytoplasm. The catalysed reaction is tRNA(Thr) + L-threonine + ATP = L-threonyl-tRNA(Thr) + AMP + diphosphate + H(+). Catalyzes the attachment of threonine to tRNA(Thr) in a two-step reaction: L-threonine is first activated by ATP to form Thr-AMP and then transferred to the acceptor end of tRNA(Thr). Also edits incorrectly charged L-seryl-tRNA(Thr). The polypeptide is Threonine--tRNA ligase (Nitrosococcus oceani (strain ATCC 19707 / BCRC 17464 / JCM 30415 / NCIMB 11848 / C-107)).